The following is a 119-amino-acid chain: uncharacterized protein (119 aa).

A run of 2 helical transmembrane segments spans residues 19 to 39 (FYPS…PSFL) and 68 to 88 (FPWF…PWLL).

It is found in the membrane. This is an uncharacterized protein from Saccharomyces cerevisiae (strain ATCC 204508 / S288c) (Baker's yeast).